A 721-amino-acid chain; its full sequence is WD repeat and coiled-coil-containing protein (721 aa).

Met-1 bears the N-acetylmethionine mark. WD repeat units lie at residues 55–98 (GQFE…MESS) and 154–194 (NTQG…LHRC). Phosphoserine is present on residues Ser-299, Ser-468, Ser-501, and Ser-523. The span at 520–537 (QPASLPRHSSTPDHTSTL) shows a compositional bias: polar residues. The segment at 520-553 (QPASLPRHSSTPDHTSTLEPPRLPQRKNLQSEKE) is disordered. Residue Thr-530 is modified to Phosphothreonine. Positions 539 to 545 (PPRLPQR) are interaction with HCK. Residues 556–584 (QLSKEVEILSRNLVEMQRCLSELTNRLHN) are a coiled coil. 2 positions are modified to phosphoserine: Ser-686 and Ser-690.

In terms of assembly, oligomer. Interacts with HCK (via SH3 domain). In terms of processing, phosphorylated on Tyr when associated with HCK.

This Homo sapiens (Human) protein is WD repeat and coiled-coil-containing protein.